Reading from the N-terminus, the 95-residue chain is Aspartyl/glutamyl-tRNA(Asn/Gln) amidotransferase subunit C (95 aa).

It belongs to the GatC family. Heterotrimer of A, B and C subunits.

The catalysed reaction is L-glutamyl-tRNA(Gln) + L-glutamine + ATP + H2O = L-glutaminyl-tRNA(Gln) + L-glutamate + ADP + phosphate + H(+). The enzyme catalyses L-aspartyl-tRNA(Asn) + L-glutamine + ATP + H2O = L-asparaginyl-tRNA(Asn) + L-glutamate + ADP + phosphate + 2 H(+). Allows the formation of correctly charged Asn-tRNA(Asn) or Gln-tRNA(Gln) through the transamidation of misacylated Asp-tRNA(Asn) or Glu-tRNA(Gln) in organisms which lack either or both of asparaginyl-tRNA or glutaminyl-tRNA synthetases. The reaction takes place in the presence of glutamine and ATP through an activated phospho-Asp-tRNA(Asn) or phospho-Glu-tRNA(Gln). This is Aspartyl/glutamyl-tRNA(Asn/Gln) amidotransferase subunit C from Campylobacter lari (strain RM2100 / D67 / ATCC BAA-1060).